We begin with the raw amino-acid sequence, 312 residues long: Zygote arrest protein 1.L (312 aa).

Disordered stretches follow at residues 79-133 (RDVG…VRFP) and 150-205 (FQDK…DQTR). 2 stretches are compositionally biased toward polar residues: residues 86 to 95 (NPRQDASVQC) and 113 to 128 (PQQS…SPTK). Residues 152–196 (DKGENLSEKTEALRSEGSRGEGGRPEGKQEDGEIKEQTKMDKADQ) show a composition bias toward basic and acidic residues. The 3CxxC-type zinc finger occupies 214 to 297 (KYGYYHCKDC…RQDLCGRCKG (84 aa)).

This sequence belongs to the ZAR1 family. Ovary.

The protein localises to the cytoplasm. It localises to the cytoplasmic ribonucleoprotein granule. Its function is as follows. mRNA-binding protein required for maternal mRNA storage, translation and degradation during oocyte maturation. Probably promotes formation of some phase-separated membraneless compartment that stores maternal mRNAs in oocytes: acts by undergoing liquid-liquid phase separation upon binding to maternal mRNAs. Binds to the 3'-UTR of maternal mRNAs in immature oocytes, inhibiting their translation. The polypeptide is Zygote arrest protein 1.L (Xenopus laevis (African clawed frog)).